Here is a 574-residue protein sequence, read N- to C-terminus: Secreted lipase 1 (574 aa).

The signal sequence occupies residues 1 to 17 (MKLSLVPIFALLSTAFA). An intrachain disulfide couples cysteine 95 to cysteine 132. Serine 244 serves as the catalytic Acyl-ester intermediate. A disulfide bridge connects residues cysteine 303 and cysteine 312. Asparagine 323 carries N-linked (GlcNAc...) asparagine glycosylation. Glutamate 376 functions as the Charge relay system in the catalytic mechanism. Asparagine 386 carries an N-linked (GlcNAc...) asparagine glycan. Catalysis depends on histidine 489, which acts as the Charge relay system. N-linked (GlcNAc...) asparagine glycosylation is present at asparagine 524.

The protein belongs to the type-B carboxylesterase/lipase family.

The protein localises to the secreted. The catalysed reaction is a carboxylic ester + H2O = an alcohol + a carboxylate + H(+). Its function is as follows. Secreted lipase that allows the use of hydrolyzed lipids as carbon sources. Has highest activity with methyl umbelliferyl oleate (C18:1), whereas much lower activities are obtained with the respective esters of palmitate (C16:0) and stearate (C18:0) (24% and 12% of the activity obtained with umbelliferyl oleate, respectively). Hydrolyzes 1- and 3-positioned ester bonds in preference to 2-positioned ester bonds. The production rate of monoglycerides is lower than that of diacylglycerides. Seems not required for the penetration of intact host tissue. The chain is Secreted lipase 1 from Botryotinia fuckeliana (strain B05.10) (Noble rot fungus).